The sequence spans 317 residues: 4-diphosphocytidyl-2-C-methyl-D-erythritol kinase (317 aa).

Lys-11 is an active-site residue. 99-109 (PVAAGLAGGST) is a binding site for ATP. Asp-141 is a catalytic residue.

The protein belongs to the GHMP kinase family. IspE subfamily.

The catalysed reaction is 4-CDP-2-C-methyl-D-erythritol + ATP = 4-CDP-2-C-methyl-D-erythritol 2-phosphate + ADP + H(+). It functions in the pathway isoprenoid biosynthesis; isopentenyl diphosphate biosynthesis via DXP pathway; isopentenyl diphosphate from 1-deoxy-D-xylulose 5-phosphate: step 3/6. In terms of biological role, catalyzes the phosphorylation of the position 2 hydroxy group of 4-diphosphocytidyl-2C-methyl-D-erythritol. In Nostoc sp. (strain PCC 7120 / SAG 25.82 / UTEX 2576), this protein is 4-diphosphocytidyl-2-C-methyl-D-erythritol kinase.